A 272-amino-acid chain; its full sequence is NH(3)-dependent NAD(+) synthetase (272 aa).

45-52 (GISGGQDS) serves as a coordination point for ATP. Asp51 is a Mg(2+) binding site. Residue Arg138 coordinates deamido-NAD(+). Residue Thr158 coordinates ATP. Glu163 contributes to the Mg(2+) binding site. Deamido-NAD(+) contacts are provided by Lys171 and Asp178. Lys187 and Thr209 together coordinate ATP. A deamido-NAD(+)-binding site is contributed by 258–259 (HK).

It belongs to the NAD synthetase family. Homodimer.

The enzyme catalyses deamido-NAD(+) + NH4(+) + ATP = AMP + diphosphate + NAD(+) + H(+). Its pathway is cofactor biosynthesis; NAD(+) biosynthesis; NAD(+) from deamido-NAD(+) (ammonia route): step 1/1. Catalyzes the ATP-dependent amidation of deamido-NAD to form NAD. Uses ammonia as a nitrogen source. In Bacillus thuringiensis subsp. konkukian (strain 97-27), this protein is NH(3)-dependent NAD(+) synthetase.